A 146-amino-acid chain; its full sequence is Ribonuclease H (146 aa).

The RNase H type-1 domain maps to 1–143; sequence MKEIIIYTDG…CDQLARNAIK (143 aa). Positions 9, 47, 70, and 135 each coordinate Mg(2+).

This sequence belongs to the RNase H family. In terms of assembly, monomer. Mg(2+) is required as a cofactor.

The protein resides in the cytoplasm. It catalyses the reaction Endonucleolytic cleavage to 5'-phosphomonoester.. Functionally, endonuclease that specifically degrades the RNA of RNA-DNA hybrids. This is Ribonuclease H from Syntrophomonas wolfei subsp. wolfei (strain DSM 2245B / Goettingen).